The primary structure comprises 314 residues: NF-kappa-B inhibitor alpha (314 aa).

The tract at residues 1–40 (MFQPAGHGQDWAMEGPRDGLKKERLVDDRHDSGLDSMKDE) is disordered. Positions 15–40 (GPRDGLKKERLVDDRHDSGLDSMKDE) are enriched in basic and acidic residues. K21 participates in a covalent cross-link: Glycyl lysine isopeptide (Lys-Gly) (interchain with G-Cter in SUMO); alternate. A Glycyl lysine isopeptide (Lys-Gly) (interchain with G-Cter in ubiquitin); alternate cross-link involves residue K21. K22 is covalently cross-linked (Glycyl lysine isopeptide (Lys-Gly) (interchain with G-Cter in ubiquitin)). Positions 30–36 (HDSGLDS) match the Destruction motif motif. Position 32 is a phosphoserine; by IKKB (S32). A Phosphoserine; by IKKA, IKKB, IKKE and TBK1 modification is found at S36. The residue at position 42 (Y42) is a Phosphotyrosine. A Nuclear export signal motif is present at residues 45–54 (MVKELREIRL). ANK repeat units follow at residues 73–103 (DGDS…DLAF), 110–139 (LQQT…DPEL), 143–172 (RGNT…PQHL), 182–211 (NGHT…DVNA), and 216–245 (NGRT…DVNR). The Nuclear import signal motif lies at 110–120 (LQQTPLHLAVI). Residues N210 and N244 each carry the (3S)-3-hydroxyasparagine; by HIF1AN modification. S283 and S288 each carry phosphoserine; by CK2. Residue T291 is modified to Phosphothreonine; by CK2. Position 293 is a phosphoserine; by CK2 (S293). Residue T296 is modified to Phosphothreonine.

This sequence belongs to the NF-kappa-B inhibitor family. In terms of assembly, interacts with RELA; the interaction requires the nuclear import signal. Part of a 70-90 kDa complex at least consisting of CHUK, IKBKB, NFKBIA, RELA, ELP1 and MAP3K14. Interacts with NKIRAS1 and NKIRAS2. Interacts with RWDD3; the interaction enhances sumoylation. Interacts with PRMT2. Interacts with PRKACA in platelets; this interaction is disrupted by thrombin and collagen. Interacts with MEFV. Interacts with DDRGK1; positively regulates NFKBIA phosphorylation and degradation. Interacts with HNRNPA2B1; the interaction may be mediated by the RRM2 domain of HNRNPA2B1, and HNRNPA2B1 may interact simultaneously with FAM76B and either NFKBIA or NFKBIE to form a complex. Post-translationally, phosphorylated at Ser-32 and Ser-36 by IKKA/CHUK and IKKB/IKBKB; disables inhibition of NF-kappa-B DNA-binding activity. Phosphorylation at positions 32 and 36 is prerequisite to recognition by the SCF(FBXW11) and SCF(BTRC) complexes, leading to polyubiquitination and subsequent degradation. Polyubiquitinated at Lys-21 and/or Lys-22 following phosphorylation at Ser-32 and Ser-36. Monoubiquitinated at Lys-21 and/or Lys-22 by UBE2D3. Ubiquitin chain elongation is then performed by CDC34 in cooperation with the SCF(FBXW11) E3 ligase complex, building ubiquitin chains from the UBE2D3-primed NFKBIA-linked ubiquitin. The resulting polyubiquitination leads to protein degradation. Also ubiquitinated by the SCF(BTRC) complex following stimulus-dependent phosphorylation at Ser-32 and Ser-36. Deubiquitinated by USP38, leading to NF-kappa-B inhibition. In terms of processing, sumoylated; sumoylation requires the presence of the nuclear import signal. Sumoylation blocks ubiquitination and proteasome-mediated degradation of the protein thereby increasing the protein stability. Post-translationally, hydroxylated by HIF1AN. In terms of tissue distribution, highly expressed in lymph node, thymus followed by liver, brain, muscle, kidney, gastrointestinal and reproductive tract.

It localises to the cytoplasm. Its subcellular location is the nucleus. Its function is as follows. Inhibits the activity of dimeric NF-kappa-B/REL complexes by trapping REL (RELA/p65 and NFKB1/p50) dimers in the cytoplasm by masking their nuclear localization signals. On cellular stimulation by immune and pro-inflammatory responses, becomes phosphorylated promoting ubiquitination and degradation, enabling the dimeric RELA to translocate to the nucleus and activate transcription. In Mus musculus (Mouse), this protein is NF-kappa-B inhibitor alpha (Nfkbia).